Here is a 621-residue protein sequence, read N- to C-terminus: Zinc metalloproteinase-disintegrin-like TSV-DM (621 aa).

Residues 1–20 (MIQVLLVTICLAVFPYQGSS) form the signal peptide. The propeptide occupies 21–191 (IILESGNVND…EASQSNLTPE (171 aa)). Glutamine 192 carries the post-translational modification Pyrrolidone carboxylic acid. Positions 200–396 (KYVKFFLVAD…NMPQCILKKP (197 aa)) constitute a Peptidase M12B domain. Asparagine 219 carries an N-linked (GlcNAc...) asparagine glycan. Intrachain disulfides connect cysteine 311/cysteine 391, cysteine 351/cysteine 375, and cysteine 353/cysteine 358. A Zn(2+)-binding site is contributed by histidine 336. The active site involves glutamate 337. The Zn(2+) site is built by histidine 340 and histidine 346. The Disintegrin domain occupies 404–489 (PPVCGNYFVE…AECTDRFQRN (86 aa)). Ca(2+) contacts are provided by valine 406, asparagine 409, phenylalanine 411, glutamate 413, glutamate 416, and aspartate 419. 14 disulfides stabilise this stretch: cysteine 407/cysteine 436, cysteine 418/cysteine 431, cysteine 420/cysteine 426, cysteine 430/cysteine 453, cysteine 444/cysteine 450, cysteine 449/cysteine 475, cysteine 462/cysteine 482, cysteine 469/cysteine 500, cysteine 493/cysteine 505, cysteine 512/cysteine 562, cysteine 527/cysteine 573, cysteine 540/cysteine 550, cysteine 557/cysteine 599, and cysteine 593/cysteine 605. A D/ECD-tripeptide motif is present at residues 468-470 (ECD). Ca(2+) contacts are provided by aspartate 470, methionine 471, aspartate 473, aspartate 484, and arginine 485. The N-linked (GlcNAc...) asparagine glycan is linked to asparagine 502.

It belongs to the venom metalloproteinase (M12B) family. P-III subfamily. P-IIIc sub-subfamily. In terms of assembly, homodimer; disulfide-linked. Requires Zn(2+) as cofactor. In terms of processing, the N-terminus is blocked. In terms of tissue distribution, expressed by the venom gland.

It is found in the secreted. Inhibited by EDTA and DTT, and partially inhibited by EGTA, but not inhibited by PMSF and NEM. Snake venom zinc metalloprotease that hydrolyzes the alpha-chain (FGA) and more slowly the beta-chain (FGB) of fibrinogen. Inhibits cell proliferation and induces cell morphologic changes transiently on human umbilical vein endothelial cells. This is Zinc metalloproteinase-disintegrin-like TSV-DM from Trimeresurus stejnegeri (Chinese green tree viper).